The sequence spans 59 residues: Large ribosomal subunit protein bL32 (59 aa).

Belongs to the bacterial ribosomal protein bL32 family.

This chain is Large ribosomal subunit protein bL32, found in Anaeromyxobacter dehalogenans (strain 2CP-C).